Reading from the N-terminus, the 376-residue chain is E3 ubiquitin-protein ligase RNF34 (376 aa).

The FYVE-type zinc finger occupies 56–107 (EGPNIVCKACGLSFSVFRKKHVCCDCKKDFCSLCSVSQENLRRCSTCHLLQE). Residues 115 to 134 (LMRLKVKDLRQYLLLRNIPT) enclose the SAP 1 domain. Serine 169 is subject to Phosphoserine. The interval 216–256 (IASANTDDDDDDDDDDDDDEDDDDEQEEEEQNPGLSKKKAR) is disordered. Residues 221-246 (TDDDDDDDDDDDDDEDDDDEQEEEEQ) show a composition bias toward acidic residues. Phosphoserine is present on residues serine 258 and serine 260. One can recognise an SAP 2 domain in the interval 268–282 (VEGMSVRQLKEILAR). The RING-type zinc-finger motif lies at 329–364 (CRICMDAVIDCVLLECGHMVTCTKCGKRMSECPICR).

As to quaternary structure, interacts with CASP8 and CASP10. Interacts with p53/TP53; involved in p53/TP53 ubiquitination. Interacts (via RING-type zinc finger) with MDM2; the interaction stabilizes MDM2. Interacts (via RING-type zinc finger) with PPARGC1A. Interacts with NOD1. In terms of processing, autoubiquitinated (in vitro). Proteolytically cleaved by caspases upon induction of apoptosis by TNF.

It is found in the cell membrane. Its subcellular location is the endomembrane system. The protein localises to the nucleus. It localises to the nucleus speckle. The protein resides in the cytoplasm. It is found in the cytosol. The enzyme catalyses S-ubiquitinyl-[E2 ubiquitin-conjugating enzyme]-L-cysteine + [acceptor protein]-L-lysine = [E2 ubiquitin-conjugating enzyme]-L-cysteine + N(6)-ubiquitinyl-[acceptor protein]-L-lysine.. It participates in protein modification; protein ubiquitination. Functionally, E3 ubiquitin-protein ligase that regulates several biological processes through the ubiquitin-mediated proteasomal degradation of various target proteins. Ubiquitinates the caspases CASP8 and CASP10, promoting their proteasomal degradation, to negatively regulate cell death downstream of death domain receptors in the extrinsic pathway of apoptosis. May mediate 'Lys-48'-linked polyubiquitination of RIPK1 and its subsequent proteasomal degradation thereby indirectly regulating the tumor necrosis factor-mediated signaling pathway. Negatively regulates p53/TP53 through its direct ubiquitination and targeting to proteasomal degradation. Indirectly, may also negatively regulate p53/TP53 through ubiquitination and degradation of SFN. Mediates PPARGC1A proteasomal degradation probably through ubiquitination thereby indirectly regulating the metabolism of brown fat cells. Possibly involved in innate immunity, through 'Lys-48'-linked polyubiquitination of NOD1 and its subsequent proteasomal degradation. The protein is E3 ubiquitin-protein ligase RNF34 of Mus musculus (Mouse).